The primary structure comprises 149 residues: Calmodulin (149 aa).

EF-hand domains lie at 8–43 (EQIA…LGQN), 44–79 (PTEA…KMKD), 81–116 (DSEE…LGEK), and 117–149 (LTDE…MMSK). Positions 21, 23, 25, 27, 32, 57, 59, 61, 63, 68, 94, 96, 98, 105, 130, 132, 134, 136, and 141 each coordinate Ca(2+).

Belongs to the calmodulin family.

Functionally, calmodulin mediates the control of a large number of enzymes, ion channels and other proteins by Ca(2+). Among the enzymes to be stimulated by the calmodulin-Ca(2+) complex are a number of protein kinases and phosphatases. The sequence is that of Calmodulin from Globisporangium splendens (Leaf rot fungus).